The following is a 39-amino-acid chain: Photosystem II reaction center protein J (39 aa).

The chain crosses the membrane as a helical span at residues isoleucine 7–phenylalanine 27.

This sequence belongs to the PsbJ family. In terms of assembly, PSII is composed of 1 copy each of membrane proteins PsbA, PsbB, PsbC, PsbD, PsbE, PsbF, PsbH, PsbI, PsbJ, PsbK, PsbL, PsbM, PsbT, PsbX, PsbY, PsbZ, Psb30/Ycf12, peripheral proteins PsbO, CyanoQ (PsbQ), PsbU, PsbV and a large number of cofactors. It forms dimeric complexes.

The protein localises to the cellular thylakoid membrane. One of the components of the core complex of photosystem II (PSII). PSII is a light-driven water:plastoquinone oxidoreductase that uses light energy to abstract electrons from H(2)O, generating O(2) and a proton gradient subsequently used for ATP formation. It consists of a core antenna complex that captures photons, and an electron transfer chain that converts photonic excitation into a charge separation. This chain is Photosystem II reaction center protein J, found in Microcystis aeruginosa (strain NIES-843 / IAM M-2473).